A 41-amino-acid polypeptide reads, in one-letter code: Histone H2B.3, sperm (41 aa).

Residues 1–41 form a disordered region; sequence MPRSPSKSSPKKGSPRKASPKRGGKGAKRAGKGGRRRTVVK. Short sequence motifs (SPKK motif) lie at residues 4 to 7, 9 to 12, 14 to 17, and 19 to 22; these read SPSK, SPKK, SPRK, and SPKR. The span at 9 to 41 shows a compositional bias: basic residues; sequence SPKKGSPRKASPKRGGKGAKRAGKGGRRRTVVK. Phosphoserine occurs at positions 14 and 19.

This sequence belongs to the histone H2B family. As to quaternary structure, the nucleosome is a histone octamer containing two molecules each of H2A, H2B, H3 and H4 assembled in one H3-H4 heterotetramer and two H2A-H2B heterodimers. The octamer wraps approximately 147 bp of DNA. Monoubiquitination gives a specific tag for epigenetic transcriptional activation and is also prerequisite for histone H3 'Lys-4' and 'Lys-79' methylation. Post-translationally, phosphorylated on SPKK motifs 3 and 4; which may regulate DNA binding. Dephosphorylated during maturation of spermatids to mature sperm and rephosphorylated at fertilization.

It is found in the nucleus. The protein resides in the chromosome. In terms of biological role, core component of nucleosome. Nucleosomes wrap and compact DNA into chromatin, limiting DNA accessibility to the cellular machineries which require DNA as a template. Histones thereby play a central role in transcription regulation, DNA repair, DNA replication and chromosomal stability. DNA accessibility is regulated via a complex set of post-translational modifications of histones, also called histone code, and nucleosome remodeling. The chain is Histone H2B.3, sperm from Echinus esculentus (Sea urchin).